We begin with the raw amino-acid sequence, 224 residues long: 7-cyano-7-deazaguanine synthase (224 aa).

Residue 9 to 19 (ISGGMDSTLCA) coordinates ATP. Zn(2+) is bound by residues Cys190, Cys198, Cys201, and Cys204.

Belongs to the QueC family. Requires Zn(2+) as cofactor.

It catalyses the reaction 7-carboxy-7-deazaguanine + NH4(+) + ATP = 7-cyano-7-deazaguanine + ADP + phosphate + H2O + H(+). It functions in the pathway purine metabolism; 7-cyano-7-deazaguanine biosynthesis. Its function is as follows. Catalyzes the ATP-dependent conversion of 7-carboxy-7-deazaguanine (CDG) to 7-cyano-7-deazaguanine (preQ(0)). In Campylobacter jejuni subsp. jejuni serotype O:6 (strain 81116 / NCTC 11828), this protein is 7-cyano-7-deazaguanine synthase.